A 643-amino-acid chain; its full sequence is Protein tramtrack, beta isoform (643 aa).

The 66-residue stretch at 33–98 (TDVTLAVEGQ…MYRGEVSVDQ (66 aa)) folds into the BTB domain. 2 disordered regions span residues 118–148 (EVND…PQLQ) and 171–300 (ANAG…GLDT). Lysine 123 is covalently cross-linked (Glycyl lysine isopeptide (Lys-Gly) (interchain with G-Cter in ubiquitin)). The segment covering 125–145 (SPAAAAAGAGATGSESTATTP) has biased composition (low complexity). The segment covering 176–187 (TPTLPVQPSLLS) has biased composition (polar residues). A compositionally biased stretch (basic residues) spans 192–201 (PKRKRGRPRK). Lysine 201 participates in a covalent cross-link: Glycyl lysine isopeptide (Lys-Gly) (interchain with G-Cter in ubiquitin). Basic and acidic residues predominate over residues 254–285 (HTDDLNESRDSLPSKRSKNSKDHRVVSHHEDN). Residues lysine 355, lysine 397, lysine 418, lysine 457, lysine 478, and lysine 480 each participate in a glycyl lysine isopeptide (Lys-Gly) (interchain with G-Cter in ubiquitin) cross-link. 2 C2H2-type zinc fingers span residues 508–531 (YRCK…VTSH) and 538–561 (YPCP…KIIH). A Glycyl lysine isopeptide (Lys-Gly) (interchain with G-Cter in ubiquitin) cross-link involves residue lysine 545. The disordered stretch occupies residues 584–643 (GVSGASTPPPPDLSGQNSNQSLPATSNALSTSSSSSTSSSSGSLGPLTTSAPPAPAAAAQ). A compositionally biased stretch (low complexity) spans 604–643 (SLPATSNALSTSSSSSTSSSSGSLGPLTTSAPPAPAAAAQ).

In terms of assembly, can form homodimers. Interacts with Trl in vivo via the BTB domain. Interacts with phyl. Interacts with Usp47. Polyubiquitinated by sina. Polyubiquitin linkage is mainly through 'Lys-48', but linkage through 'Lys-63' also occurs. Deubiquitination by Usp47 leads to its stabilization.

The protein resides in the nucleus. Functionally, binds to a number of sites in the transcriptional regulatory region of ftz. Isoform beta is required to repress inappropriate segmentation gene transcription and repress genes incompatible with development of photoreceptor cell fates. Probable repressor of the transcription of the segmentation genes ftz, eve, h, odd, run, and en. Inhibits Trl-dependent activation of eve. May bind to the region AGGGC/TGG. Degradation of ttk is directed by binding of sinah or sina, via the adapter molecule phyl which binds to the BTB domain of ttk. A second method of degradation exists that is phyl-independent, this is mediated by recognition of motifs in the C-terminus of ttk. This is Protein tramtrack, beta isoform (ttk) from Drosophila melanogaster (Fruit fly).